The sequence spans 350 residues: Vetispiradiene synthase 3 (350 aa).

5 residues coordinate Mg(2+): aspartate 103, aspartate 107, aspartate 246, threonine 250, and glutamate 254. The short motif at 103–107 (DDTFD) is the DDXXD motif element.

This sequence belongs to the terpene synthase family. Tpsa subfamily. Mg(2+) is required as a cofactor.

It is found in the cytoplasm. The enzyme catalyses (2E,6E)-farnesyl diphosphate = (-)-vetispiradiene + diphosphate. Its pathway is secondary metabolite biosynthesis; terpenoid biosynthesis. Functionally, sesquiterpene synthase that catalyzes the formation of vetispiradiene from trans,trans-farnesyl diphosphate. The initial internal cyclization produces the monocyclic intermediate germacrene A. The chain is Vetispiradiene synthase 3 from Hyoscyamus muticus (Egyptian henbane).